The following is a 423-amino-acid chain: Lipoyl synthase 1, mitochondrial (423 aa).

The [4Fe-4S] cluster site is built by cysteine 127, cysteine 132, cysteine 138, cysteine 159, cysteine 163, cysteine 166, and serine 375. Residues 142-364 form the Radical SAM core domain; the sequence is DEEEGTATAT…EEEAMAMGFL (223 aa).

It belongs to the radical SAM superfamily. Lipoyl synthase family. [4Fe-4S] cluster is required as a cofactor.

The protein localises to the mitochondrion. The enzyme catalyses [[Fe-S] cluster scaffold protein carrying a second [4Fe-4S](2+) cluster] + N(6)-octanoyl-L-lysyl-[protein] + 2 oxidized [2Fe-2S]-[ferredoxin] + 2 S-adenosyl-L-methionine + 4 H(+) = [[Fe-S] cluster scaffold protein] + N(6)-[(R)-dihydrolipoyl]-L-lysyl-[protein] + 4 Fe(3+) + 2 hydrogen sulfide + 2 5'-deoxyadenosine + 2 L-methionine + 2 reduced [2Fe-2S]-[ferredoxin]. It participates in protein modification; protein lipoylation via endogenous pathway; protein N(6)-(lipoyl)lysine from octanoyl-[acyl-carrier-protein]: step 2/2. Its function is as follows. Catalyzes the radical-mediated insertion of two sulfur atoms into the C-6 and C-8 positions of the octanoyl moiety bound to the lipoyl domains of lipoate-dependent enzymes, thereby converting the octanoylated domains into lipoylated derivatives. This chain is Lipoyl synthase 1, mitochondrial, found in Trypanosoma cruzi (strain CL Brener).